The primary structure comprises 269 residues: Troponin I (269 aa).

The tract at residues 1–104 (MADDEKKAAA…AKKGFMTPER (104 aa)) is disordered. Residue alanine 2 is modified to N-acetylalanine. The span at 9–50 (AAPAAAPAAAAKPAAPAAAPAANGKAAPAANGKAAPAAAAAP) shows a compositional bias: low complexity. A compositionally biased stretch (basic and acidic residues) spans 56–91 (DPNDPKVKAEEAKKAKQAEIERKRAEVRKRMEEASK). The segment at 162–171 (ERMYICEGQK) is troponin T-interaction. Positions 189 to 202 (NAQVNDLRGKFVKP) are actin-binding. Lysine 201 and lysine 205 each carry N6,N6,N6-trimethyllysine. The segment at 239–269 (TLEEEEKEKKPDWSKGKPGDAKVKEEVEAEA) is disordered.

Belongs to the troponin I family. Binds to actin and tropomyosin. As to expression, all isoforms are expressed in somatic muscle. Isoforms containing exon 6a1 (isoforms 1 and 2) are expressed in all muscles but highest expression is in abdominal muscle and splanchnic muscle of the gut. Isoforms containing exon 6b1 (isoforms 5, 6, 9 and 10) are highly expressed in the tergal depressor of trochanter (TDT) muscle.

In terms of biological role, troponin I is the ATPase inhibitory subunit of troponin in the thin filament regulatory complex. Involved in the development and maintenance of muscle and nervous system. May also be involved in the cytoskeletal apparatus. The chain is Troponin I (wupA) from Drosophila melanogaster (Fruit fly).